Consider the following 402-residue polypeptide: Subtilisin-like protease 9 (402 aa).

A signal peptide spans 1-20; the sequence is MGFFRQLFSLSLCALSLAIP. The propeptide occupies 21 to 120; sequence SKLIGLENTQ…VEVDRVVKLD (100 aa). The 84-residue stretch at 36–119 folds into the Inhibitor I9 domain; it reads SYIVVMKSTI…YVEVDRVVKL (84 aa). The 273-residue stretch at 130–402 folds into the Peptidase S8 domain; it reads SWGLGRISHK…RKLLYNGSGA (273 aa). Catalysis depends on charge relay system residues Asp162 and His193. Asn254 is a glycosylation site (N-linked (GlcNAc...) asparagine). Catalysis depends on Ser348, which acts as the Charge relay system. N-linked (GlcNAc...) asparagine glycans are attached at residues Asn390 and Asn398.

This sequence belongs to the peptidase S8 family.

It is found in the secreted. Functionally, secreted subtilisin-like serine protease with keratinolytic activity that contributes to pathogenicity. This Arthroderma benhamiae (strain ATCC MYA-4681 / CBS 112371) (Trichophyton mentagrophytes) protein is Subtilisin-like protease 9 (SUB9).